Reading from the N-terminus, the 810-residue chain is Transitional endoplasmic reticulum ATPase homolog 2 (810 aa).

Residues 252–258 (PGTGKTL), Asn353, His389, and 526–531 (GCGKTL) contribute to the ATP site. The segment covering 713 to 727 (RQEKERQDRSARGEE) has biased composition (basic and acidic residues). Disordered regions lie at residues 713 to 732 (RQEK…MEDE) and 777 to 810 (FGNN…DLYN). The segment covering 793–802 (PVGGNGGSGG) has biased composition (gly residues). The interaction with ufd-2 stretch occupies residues 805–810 (DDDLYN).

The protein belongs to the AAA ATPase family. CDC48 subfamily. As to quaternary structure, homohexamer; oligomerization is ATP-independent. Forms a ring-shaped particle of 18.3 nm diameter, that displays 6-fold radial symmetry. Interacts with cdc-48.1 and thus may form heterohexamers. Forms a complex composed of ubxn-3, cdc-48.1 and/or cdc-48.2 and substrate cdt-1. Interacts (via N-terminus) with ubxn-3. Interacts (via N-terminus) with atx-3 (via RRDR motif). Interacts (via N-terminus) with ubxn-5. Interacts with ufd-1. Interacts (via DDDLYN motif) with ufd-2. Interacts (via N-terminus) with ubxn-1. Interacts (via N-terminus) with ubxn-2. Interacts (via N-terminus) with ubxn-4. Interacts with ubxn-6. In terms of tissue distribution, expressed in body wall muscles.

The protein resides in the cytoplasm. The enzyme catalyses ATP + H2O = ADP + phosphate + H(+). The first ATP-binding region has low ATPase activity. The second ATP-binding region is responsible for ATPase activity. ATP binding to the first ATP-binding region induces intrinsic activity of the second ATP-binding region. While ATP binding to the first ATP-binding region appears to prevent ATP hydrolysis by the second ATP-binding region, ADP-binding to first region promotes the coordinate and cooperative ATPase cycle of the second ATP-binding region. ATP binding to the first ATP-binding region induces a conformational change, promoting the rotation of the first ATP-binding region relative to the second ATP-binding region in the hexamer. Inhibited by N-ethylmaleimide (NEM). In terms of biological role, ATP-dependent chaperone which probably uses the energy provided by ATP hydrolysis to generate mechanical force to unfold substrate proteins, disassemble protein complexes, and disaggregate protein aggregates. However, able to prevent aggregation of unfolded proteins also in an ATP-independent manner. Targets polyubiquitinated proteins for proteasomal degradation by binding to 'Lys-48'-linked polyubiquitin chains. Involved in the cytoplasmic elimination of misfolded proteins exported from the ER. This pathway, known as ERAD, prevents the activation of the unfolded protein response (UPR) caused by the accumulation of misfolded proteins in the ER. Together with udf-2 and chn-1, regulates myosin assembly in body wall muscles by targeting myosin chaperone unc-45 for proteasomal degradation. During oocyte meiosis and together with cdc-48.1, required for chromosome condensation at the diakinesis phase in prophase I and for progression of metaphase I. During the first embryonic cell division, regulates DNA replication and thus chromosome segregation and decondensation, and nuclear envelope re-assembly. In S phase and in association with ufd-1, npl-4.1 and/or npl-4.2 and ubxn-3, ensures the degradation of DNA licensing factor cdt-1 after the initiation of DNA replication and thus the disassembly of the DNA replication CMG helicase complex by promoting the dissociation from chromatin of several of its components including cdc-45 and sld-5. Regulates ubxn-3 nuclear localization during S phase. During the first embryonic cell divisions and together with cdc-48.1, regulates the re-assembly of the nuclear envelope after mitosis possibly by inactivating kinase air-2, a component of the chromosomal passenger complex (CPC). The chain is Transitional endoplasmic reticulum ATPase homolog 2 (cdc-48.2) from Caenorhabditis elegans.